Consider the following 292-residue polypeptide: Recombination-promoting nuclease RpnA (292 aa).

This sequence belongs to the Rpn/YhgA-like nuclease family. It depends on Mg(2+) as a cofactor.

Its activity is regulated as follows. Inhibited by EDTA, Zn(2+) and by Mg(2+) plus Mn(2+); stimulated by Ca(2+) in the presence of Mg(2+). Its function is as follows. A low activity DNA endonuclease yielding 3'-hydroxyl ends, equally active on ss or dsDNA, not active on dsRNA. Shows no sequence specificity. Upon expression enhances RecA-independent DNA recombination 49-fold, concomitantly reducing viability by 88% and probably inducing DNA damage as measured by induction of the SOS repair response in RecA cells. RecA-independent DNA recombination leads to replacement of recipient genes with large segments of donor DNA rather than DNA addition to the donor strain; increased expression of RpnA leads to smaller replacement segments, suggesting this protein may play a role in generating crossover events. The polypeptide is Recombination-promoting nuclease RpnA (Escherichia coli (strain K12)).